We begin with the raw amino-acid sequence, 347 residues long: S-adenosylmethionine:tRNA ribosyltransferase-isomerase (347 aa).

This sequence belongs to the QueA family. As to quaternary structure, monomer.

It localises to the cytoplasm. The enzyme catalyses 7-aminomethyl-7-carbaguanosine(34) in tRNA + S-adenosyl-L-methionine = epoxyqueuosine(34) in tRNA + adenine + L-methionine + 2 H(+). It functions in the pathway tRNA modification; tRNA-queuosine biosynthesis. Functionally, transfers and isomerizes the ribose moiety from AdoMet to the 7-aminomethyl group of 7-deazaguanine (preQ1-tRNA) to give epoxyqueuosine (oQ-tRNA). The polypeptide is S-adenosylmethionine:tRNA ribosyltransferase-isomerase (Streptococcus thermophilus (strain CNRZ 1066)).